The primary structure comprises 325 residues: Apoptosis-enhancing nuclease (325 aa).

The Nucleolar localization signal signature appears at 27-35; it reads RKRHKRRSR. The disordered stretch occupies residues 85–105; the sequence is RAGSGSAPCSRRPAPGKASGP. An Exonuclease domain is found at 110-266; that stretch reads CVAIDCEMVG…EDATTAMELY (157 aa). A Nuclear localization signal motif is present at residues 165 to 188; sequence RQHMRKAVPFQVAQKEILKLLKGK. Positions 281–325 are disordered; sequence LWTCPEDREPDSSTDMEQYMEDQYWPDDLAHGSRGGAREAQDRRN. Residues 308-325 are compositionally biased toward basic and acidic residues; it reads DLAHGSRGGAREAQDRRN.

It is found in the nucleus. Its subcellular location is the nucleolus. In terms of biological role, exonuclease with activity against single- and double-stranded DNA and RNA. Mediates p53-induced apoptosis. When induced by p53 following DNA damage, digests double-stranded DNA to form single-stranded DNA and amplifies DNA damage signals, leading to enhancement of apoptosis. This chain is Apoptosis-enhancing nuclease (AEN), found in Homo sapiens (Human).